A 494-amino-acid polypeptide reads, in one-letter code: Glutamyl-tRNA(Gln) amidotransferase subunit A (494 aa).

Catalysis depends on charge relay system residues Lys-81 and Ser-156. Catalysis depends on Ser-180, which acts as the Acyl-ester intermediate.

This sequence belongs to the amidase family. GatA subfamily. In terms of assembly, heterotrimer of A, B and C subunits.

The enzyme catalyses L-glutamyl-tRNA(Gln) + L-glutamine + ATP + H2O = L-glutaminyl-tRNA(Gln) + L-glutamate + ADP + phosphate + H(+). Allows the formation of correctly charged Gln-tRNA(Gln) through the transamidation of misacylated Glu-tRNA(Gln) in organisms which lack glutaminyl-tRNA synthetase. The reaction takes place in the presence of glutamine and ATP through an activated gamma-phospho-Glu-tRNA(Gln). This chain is Glutamyl-tRNA(Gln) amidotransferase subunit A, found in Mycobacterium bovis (strain ATCC BAA-935 / AF2122/97).